The following is a 254-amino-acid chain: 4-hydroxy-tetrahydrodipicolinate reductase (254 aa).

NAD(+) is bound at residue 7 to 12 (GASGRI). An NADP(+)-binding site is contributed by Arg35. Residues 91 to 93 (GTT) and 115 to 118 (AHNM) each bind NAD(+). Catalysis depends on His147, which acts as the Proton donor/acceptor. Residue His148 participates in (S)-2,3,4,5-tetrahydrodipicolinate binding. The active-site Proton donor is the Lys151. 157-158 (GT) is a binding site for (S)-2,3,4,5-tetrahydrodipicolinate.

The protein belongs to the DapB family.

It is found in the cytoplasm. The catalysed reaction is (S)-2,3,4,5-tetrahydrodipicolinate + NAD(+) + H2O = (2S,4S)-4-hydroxy-2,3,4,5-tetrahydrodipicolinate + NADH + H(+). The enzyme catalyses (S)-2,3,4,5-tetrahydrodipicolinate + NADP(+) + H2O = (2S,4S)-4-hydroxy-2,3,4,5-tetrahydrodipicolinate + NADPH + H(+). The protein operates within amino-acid biosynthesis; L-lysine biosynthesis via DAP pathway; (S)-tetrahydrodipicolinate from L-aspartate: step 4/4. Catalyzes the conversion of 4-hydroxy-tetrahydrodipicolinate (HTPA) to tetrahydrodipicolinate. The protein is 4-hydroxy-tetrahydrodipicolinate reductase of Helicobacter pylori (strain Shi470).